The following is a 338-amino-acid chain: Ketol-acid reductoisomerase (NADP(+)) (338 aa).

A KARI N-terminal Rossmann domain is found at 1–181 (MKVFYDKDAD…GGGRAGIIET (181 aa)). Residues 24-27 (YGSQ), Arg-47, and Ser-52 each bind NADP(+). His-107 is a catalytic residue. Gly-133 contributes to the NADP(+) binding site. The region spanning 182–327 (NFREETETDL…AKLRAMMPWI (146 aa)) is the KARI C-terminal knotted domain. Asp-190, Glu-194, Glu-226, and Glu-230 together coordinate Mg(2+). Ser-251 is a binding site for substrate.

It belongs to the ketol-acid reductoisomerase family. It depends on Mg(2+) as a cofactor.

The catalysed reaction is (2R)-2,3-dihydroxy-3-methylbutanoate + NADP(+) = (2S)-2-acetolactate + NADPH + H(+). It carries out the reaction (2R,3R)-2,3-dihydroxy-3-methylpentanoate + NADP(+) = (S)-2-ethyl-2-hydroxy-3-oxobutanoate + NADPH + H(+). It participates in amino-acid biosynthesis; L-isoleucine biosynthesis; L-isoleucine from 2-oxobutanoate: step 2/4. It functions in the pathway amino-acid biosynthesis; L-valine biosynthesis; L-valine from pyruvate: step 2/4. Functionally, involved in the biosynthesis of branched-chain amino acids (BCAA). Catalyzes an alkyl-migration followed by a ketol-acid reduction of (S)-2-acetolactate (S2AL) to yield (R)-2,3-dihydroxy-isovalerate. In the isomerase reaction, S2AL is rearranged via a Mg-dependent methyl migration to produce 3-hydroxy-3-methyl-2-ketobutyrate (HMKB). In the reductase reaction, this 2-ketoacid undergoes a metal-dependent reduction by NADPH to yield (R)-2,3-dihydroxy-isovalerate. In Ralstonia pickettii (strain 12J), this protein is Ketol-acid reductoisomerase (NADP(+)).